The sequence spans 56 residues: Large ribosomal subunit protein bL32 (56 aa).

Positions 1–34 (MAVQQNKKSRSKRGMRRSHDSLSTAQLSVDATSG) are disordered. Positions 7–16 (KKSRSKRGMR) are enriched in basic residues. The span at 21-31 (SLSTAQLSVDA) shows a compositional bias: polar residues.

It belongs to the bacterial ribosomal protein bL32 family.

This is Large ribosomal subunit protein bL32 from Shewanella frigidimarina (strain NCIMB 400).